The sequence spans 105 residues: UPF0145 protein Sala_0338 (105 aa).

Belongs to the UPF0145 family.

The chain is UPF0145 protein Sala_0338 from Sphingopyxis alaskensis (strain DSM 13593 / LMG 18877 / RB2256) (Sphingomonas alaskensis).